We begin with the raw amino-acid sequence, 1207 residues long: Dermatan-sulfate epimerase-like protein (1207 aa).

The first 22 residues, 1–22, serve as a signal peptide directing secretion; sequence MAFMFTEHLLFLTLMMCSFSTC. N-linked (GlcNAc...) asparagine glycans are attached at residues Asn28, Asn661, Asn683, and Asn704. 2 helical membrane-spanning segments follow: residues 761–781 and 798–818; these read FPFG…SLVI and CVLI…WSTC. Asn869 carries an N-linked (GlcNAc...) asparagine glycan.

The protein belongs to the dermatan-sulfate isomerase family.

The protein resides in the membrane. The chain is Dermatan-sulfate epimerase-like protein (Dsel) from Mus musculus (Mouse).